A 278-amino-acid polypeptide reads, in one-letter code: Tryptophan synthase alpha chain (278 aa).

Residues Glu-50 and Asp-61 each act as proton acceptor in the active site.

The protein belongs to the TrpA family. As to quaternary structure, tetramer of two alpha and two beta chains.

It carries out the reaction (1S,2R)-1-C-(indol-3-yl)glycerol 3-phosphate + L-serine = D-glyceraldehyde 3-phosphate + L-tryptophan + H2O. The protein operates within amino-acid biosynthesis; L-tryptophan biosynthesis; L-tryptophan from chorismate: step 5/5. The alpha subunit is responsible for the aldol cleavage of indoleglycerol phosphate to indole and glyceraldehyde 3-phosphate. In Methylobacterium nodulans (strain LMG 21967 / CNCM I-2342 / ORS 2060), this protein is Tryptophan synthase alpha chain.